We begin with the raw amino-acid sequence, 158 residues long: SUMO-conjugating enzyme UBC9 (158 aa).

The UBC core domain maps to 4 to 157 (IALSRLAQER…VRAQAKKFAP (154 aa)). Positions 13 to 18 (RKAWRK) are interaction with SUMO1. Cys-93 functions as the Glycyl thioester intermediate in the catalytic mechanism.

Belongs to the ubiquitin-conjugating enzyme family. As to quaternary structure, interacts with SOX9.

It localises to the nucleus. Its subcellular location is the cytoplasm. It participates in protein modification; protein sumoylation. In terms of biological role, accepts the ubiquitin-like proteins SUMO1, SUMO2 and SUMO3 from the UBLE1A-UBLE1B E1 complex and catalyzes their covalent attachment to other proteins with the help of an E3 ligase such as RANBP2 or CBX4. Essential for nuclear architecture and chromosome segregation. This is SUMO-conjugating enzyme UBC9 (UBE2I) from Gallus gallus (Chicken).